The sequence spans 240 residues: Dephospho-CoA kinase domain-containing protein (240 aa).

Positions 3-207 constitute a DPCK domain; it reads LVGLTGGIAS…RSMEYLPLRL (205 aa). Position 8–15 (8–15) interacts with ATP; sequence GGIASGKS.

Belongs to the CoaE family.

This chain is Dephospho-CoA kinase domain-containing protein (Dcakd), found in Rattus norvegicus (Rat).